A 293-amino-acid polypeptide reads, in one-letter code: MFQHTVKAPALFAGVGVHTGAYTRVAVRPAAADTGIVFVRTDVSGSDNRIAVSPEAVCKTQLGTVVGNAAGVTVSTIEHLMAALVMLGVDNAVVEVDGPEMPIMDGSALPFVRVLDRAGRREQQAPRRYIEILAPVEVIDGDKRAALRPAEAFEVAFEIRFGSQAIGTQAIDLPMDEAAFRDELADCRTFGFLHEVEALRAMGLARGGSMENAVVIDGDRILNPEGLRRPDEFVRHKALDAIGDLFVLGAPVVGRFEGVLAGHGLNNALVRALAARPDAWRVRTFAEDLAEAV.

Zn(2+) contacts are provided by His-79, His-236, and Asp-240. His-263 (proton donor) is an active-site residue.

This sequence belongs to the LpxC family. The cofactor is Zn(2+).

The catalysed reaction is a UDP-3-O-[(3R)-3-hydroxyacyl]-N-acetyl-alpha-D-glucosamine + H2O = a UDP-3-O-[(3R)-3-hydroxyacyl]-alpha-D-glucosamine + acetate. It participates in glycolipid biosynthesis; lipid IV(A) biosynthesis; lipid IV(A) from (3R)-3-hydroxytetradecanoyl-[acyl-carrier-protein] and UDP-N-acetyl-alpha-D-glucosamine: step 2/6. Catalyzes the hydrolysis of UDP-3-O-myristoyl-N-acetylglucosamine to form UDP-3-O-myristoylglucosamine and acetate, the committed step in lipid A biosynthesis. This chain is UDP-3-O-acyl-N-acetylglucosamine deacetylase, found in Phenylobacterium zucineum (strain HLK1).